The primary structure comprises 276 residues: Transcriptional antiactivator ExsD (276 aa).

In terms of assembly, can form homotrimer. Interacts with ExsA; this interaction inhibits ExsA activity. Interacts with ExsC; this interaction dissociates the ExsD-ExsA complex.

In terms of biological role, negative regulator of the type III secretion system regulon. Acts by disrupting transcriptional activator ExsA self-association and DNA-binding activity in absence of inducing signals. Upon host cell contact, this interaction is disrupted by the anti-antiactivator protein ExsC leading to ExsA activation. The polypeptide is Transcriptional antiactivator ExsD (exsD) (Pseudomonas aeruginosa (strain ATCC 15692 / DSM 22644 / CIP 104116 / JCM 14847 / LMG 12228 / 1C / PRS 101 / PAO1)).